Consider the following 633-residue polypeptide: Cyclic GMP-AMP synthase-like receptor 1 (633 aa).

3 disordered regions span residues 23-80, 107-214, and 250-276; these read KVHG…HPHT, FKGP…TDPF, and REDDKSDQEKRDSWKRREGSVDDRPSS. Basic and acidic residues predominate over residues 29 to 67; sequence KQHESAHPPRERHTERTATKRSDETKTASRPTASHEGKT. A compositionally biased stretch (polar residues) spans 68–80; sequence HTTNPRGQVHPHT. Composition is skewed to basic and acidic residues over residues 125–143, 176–194, and 250–274; these read RKPETPKKPHSATKDDHRT, RKPDTPKKPHSATKDDHRT, and REDDKSDQEKRDSWKRREGSVDDRP. Glutamate 353, aspartate 355, and aspartate 455 together coordinate Mg(2+).

The protein belongs to the mab-21 family. Mg(2+) is required as a cofactor. The cofactor is Mn(2+).

The catalysed reaction is UTP + ATP = 2',3'-cUAMP + 2 diphosphate. Its function is as follows. Nucleotidyltransferase that catalyzes the formation of cyclic UMP-AMP (2',3'-cUAMP) from ATP and UTP and plays a key role in innate immunity. Acts as a key sensor of double-stranded DNA (dsDNA), the presence of dsDNA in the cytoplasm being a danger signal that triggers the immune responses. Directly binds dsDNA, activating the nucleotidyltransferase activity, leading to synthesis of 2',3'-cUAMP, a second messenger that binds to and activates Sting, thereby triggering the immune response via activation of the NF-kappa-B transcription factor. This chain is Cyclic GMP-AMP synthase-like receptor 1, found in Crassostrea virginica (Eastern oyster).